Here is an 88-residue protein sequence, read N- to C-terminus: Exodeoxyribonuclease 7 small subunit (88 aa).

The protein belongs to the XseB family. Heterooligomer composed of large and small subunits.

The protein resides in the cytoplasm. It carries out the reaction Exonucleolytic cleavage in either 5'- to 3'- or 3'- to 5'-direction to yield nucleoside 5'-phosphates.. In terms of biological role, bidirectionally degrades single-stranded DNA into large acid-insoluble oligonucleotides, which are then degraded further into small acid-soluble oligonucleotides. This chain is Exodeoxyribonuclease 7 small subunit, found in Tolumonas auensis (strain DSM 9187 / NBRC 110442 / TA 4).